A 155-amino-acid chain; its full sequence is SsrA-binding protein (155 aa).

The interval 135–155 (KRQDIKQRDVERETRREIMRH) is disordered.

This sequence belongs to the SmpB family.

It is found in the cytoplasm. Its function is as follows. Required for rescue of stalled ribosomes mediated by trans-translation. Binds to transfer-messenger RNA (tmRNA), required for stable association of tmRNA with ribosomes. tmRNA and SmpB together mimic tRNA shape, replacing the anticodon stem-loop with SmpB. tmRNA is encoded by the ssrA gene; the 2 termini fold to resemble tRNA(Ala) and it encodes a 'tag peptide', a short internal open reading frame. During trans-translation Ala-aminoacylated tmRNA acts like a tRNA, entering the A-site of stalled ribosomes, displacing the stalled mRNA. The ribosome then switches to translate the ORF on the tmRNA; the nascent peptide is terminated with the 'tag peptide' encoded by the tmRNA and targeted for degradation. The ribosome is freed to recommence translation, which seems to be the essential function of trans-translation. In Oleidesulfovibrio alaskensis (strain ATCC BAA-1058 / DSM 17464 / G20) (Desulfovibrio alaskensis), this protein is SsrA-binding protein.